The primary structure comprises 71 residues: Gas vesicle protein A (71 aa).

It belongs to the gas vesicle GvpA family. As to quaternary structure, the gas vesicle shell is 2 nm thick and consists of a single layer of this protein. It forms helical ribs nearly perpendicular to the long axis of the vesicle.

Its subcellular location is the gas vesicle shell. Its function is as follows. Gas vesicles are hollow, gas filled proteinaceous nanostructures found in some microorganisms. During planktonic growth they allow positioning of the organism at a favorable depth for light or nutrient acquisition. GvpA forms the protein shell. Functionally, cluster expression in E.coli (gvpA1-gvpA2-gvpC-gvpN-gvpJ-gvpK-gvpF-gvpG-gvpV-gvpW) allows cells to float and produces irregularly shaped gas vesicles. This chain is Gas vesicle protein A, found in Nostoc sp. (strain PCC 7120 / SAG 25.82 / UTEX 2576).